Consider the following 128-residue polypeptide: Large ribosomal subunit protein uL18 (128 aa).

Residues 1–36 (MAKRSSLTRRGVSPRAAARARRHMRVRKKVRGTPER) are disordered. Over residues 18–31 (ARARRHMRVRKKVR) the composition is skewed to basic residues.

Belongs to the universal ribosomal protein uL18 family. Part of the 50S ribosomal subunit; part of the 5S rRNA/L5/L18/L25 subcomplex. Contacts the 5S and 23S rRNAs.

In terms of biological role, this is one of the proteins that bind and probably mediate the attachment of the 5S RNA into the large ribosomal subunit, where it forms part of the central protuberance. This is Large ribosomal subunit protein uL18 from Thermobifida fusca (strain YX).